Reading from the N-terminus, the 364-residue chain is MAQQTPLYEQHTLCGARMVDFHGWMMPLHYGSQIDEHHAVRTDAGMFDVSHMTIVDLRGSRTREFLRYLLANDVAKLTKSGKALYSGMLNASGGVIDDLIVYYFTEDFFRLVVNSATREKDLSWITQHAEPFGIEITVRDDLSMIAVQGPNAQAKAATLFNDAQRQAVEGMKPFFGVQAGDLFIATTGYTGEAGYEIALPNEKAADFWRALVEAGVKPCGLGARDTLRLEAGMNLYSQEMDETISPLAANMGWTIAWEPADRDFIGREALEAQREHGTEKLVGLVMTEKGVLRNELPVRFTDVQGNQHEGIITSGTFSPTLGYSIALARVPEGIGETAIVQIRNREMPVKVTKPVFVRNGKAVA.

The protein belongs to the GcvT family. As to quaternary structure, the glycine cleavage system is composed of four proteins: P, T, L and H.

It catalyses the reaction N(6)-[(R)-S(8)-aminomethyldihydrolipoyl]-L-lysyl-[protein] + (6S)-5,6,7,8-tetrahydrofolate = N(6)-[(R)-dihydrolipoyl]-L-lysyl-[protein] + (6R)-5,10-methylene-5,6,7,8-tetrahydrofolate + NH4(+). The glycine cleavage system catalyzes the degradation of glycine. This is Aminomethyltransferase from Shigella dysenteriae serotype 1 (strain Sd197).